Reading from the N-terminus, the 316-residue chain is Porphobilinogen deaminase (316 aa).

Cysteine 240 bears the S-(dipyrrolylmethanemethyl)cysteine mark.

The protein belongs to the HMBS family. Monomer. Requires dipyrromethane as cofactor.

The catalysed reaction is 4 porphobilinogen + H2O = hydroxymethylbilane + 4 NH4(+). Its pathway is porphyrin-containing compound metabolism; protoporphyrin-IX biosynthesis; coproporphyrinogen-III from 5-aminolevulinate: step 2/4. Its function is as follows. Tetrapolymerization of the monopyrrole PBG into the hydroxymethylbilane pre-uroporphyrinogen in several discrete steps. This Alkaliphilus metalliredigens (strain QYMF) protein is Porphobilinogen deaminase.